The sequence spans 661 residues: 1-deoxy-D-xylulose-5-phosphate synthase (661 aa).

Thiamine diphosphate contacts are provided by residues histidine 98 and 139-141 (AHS). Aspartate 170 provides a ligand contact to Mg(2+). Thiamine diphosphate contacts are provided by residues 171–172 (GA), asparagine 199, tyrosine 309, and glutamate 391. Asparagine 199 is a Mg(2+) binding site.

Belongs to the transketolase family. DXPS subfamily. As to quaternary structure, homodimer. It depends on Mg(2+) as a cofactor. Requires thiamine diphosphate as cofactor.

The catalysed reaction is D-glyceraldehyde 3-phosphate + pyruvate + H(+) = 1-deoxy-D-xylulose 5-phosphate + CO2. It participates in metabolic intermediate biosynthesis; 1-deoxy-D-xylulose 5-phosphate biosynthesis; 1-deoxy-D-xylulose 5-phosphate from D-glyceraldehyde 3-phosphate and pyruvate: step 1/1. Catalyzes the acyloin condensation reaction between C atoms 2 and 3 of pyruvate and glyceraldehyde 3-phosphate to yield 1-deoxy-D-xylulose-5-phosphate (DXP). The sequence is that of 1-deoxy-D-xylulose-5-phosphate synthase from Bradyrhizobium diazoefficiens (strain JCM 10833 / BCRC 13528 / IAM 13628 / NBRC 14792 / USDA 110).